Reading from the N-terminus, the 180-residue chain is DNA replication regulator protein HobA (180 aa).

Residues Glu-17, Glu-27, Glu-140, Glu-143, and Asn-176 each contribute to the Ca(2+) site.

In terms of assembly, forms dimers and homotetramers. Interacts with domains I and II (residues 1-112) of DnaA. In a crystal with domains I and II of DnaA HobA forms tetramers with DnaA fragments bound at the dimer interface of the tetramer. Ca(2+) serves as cofactor.

In terms of biological role, required for DNA replication initiation. Increases binding of DnaA to oriC region. In Helicobacter pylori (strain ATCC 700392 / 26695) (Campylobacter pylori), this protein is DNA replication regulator protein HobA.